A 203-amino-acid polypeptide reads, in one-letter code: Large ribosomal subunit protein bL25 (203 aa).

The protein belongs to the bacterial ribosomal protein bL25 family. CTC subfamily. Part of the 50S ribosomal subunit; part of the 5S rRNA/L5/L18/L25 subcomplex. Contacts the 5S rRNA. Binds to the 5S rRNA independently of L5 and L18.

Functionally, this is one of the proteins that binds to the 5S RNA in the ribosome where it forms part of the central protuberance. In Cupriavidus pinatubonensis (strain JMP 134 / LMG 1197) (Cupriavidus necator (strain JMP 134)), this protein is Large ribosomal subunit protein bL25.